Consider the following 111-residue polypeptide: Small ribosomal subunit protein bS6 (111 aa).

The protein belongs to the bacterial ribosomal protein bS6 family.

Its function is as follows. Binds together with bS18 to 16S ribosomal RNA. In Francisella philomiragia subsp. philomiragia (strain ATCC 25017 / CCUG 19701 / FSC 153 / O#319-036), this protein is Small ribosomal subunit protein bS6.